We begin with the raw amino-acid sequence, 461 residues long: Propionyl-CoA carboxylase regulator (461 aa).

One can recognise an HTH cro/C1-type domain in the interval 11 to 65 (LRELRVKLGLTQKVFAERLGASLPYLNQMENNHRPVSATVVLALAQEFGVDVTKL). Residues 22–41 (QKVFAERLGASLPYLNQMEN) constitute a DNA-binding region (H-T-H motif).

Belongs to the short-chain fatty acyl-CoA assimilation regulator (ScfR) family.

Transcriptional regulator that controls propionyl-CoA assimilation through the methylmalonyl-CoA pathway via regulation of pccB expression. The polypeptide is Propionyl-CoA carboxylase regulator (Cereibacter sphaeroides (strain ATCC 17023 / DSM 158 / JCM 6121 / CCUG 31486 / LMG 2827 / NBRC 12203 / NCIMB 8253 / ATH 2.4.1.) (Rhodobacter sphaeroides)).